We begin with the raw amino-acid sequence, 752 residues long: F-box and WD repeat domain containing protein 10B (752 aa).

WD repeat units follow at residues 169–206, 451–490, 493–532, 534–569, 572–609, and 611–652; these read GLNQ…TSLP, GHAG…CTRI, GHQG…KTFR, KDPI…LVKT, GHEG…ERCL, and AFKH…KVIK.

As to expression, expressed in pancreas, heart and skeletal muscle.

The sequence is that of F-box and WD repeat domain containing protein 10B from Homo sapiens (Human).